The chain runs to 158 residues: HTH-type transcriptional repressor NicR (158 aa).

In terms of domain architecture, HTH marR-type spans 20–152 (TEQVGHLLRK…ILYLLRKMID (133 aa)). Positions 66-89 (QAELIKATAVDQATIRGIVERLKA) form a DNA-binding region, H-T-H motif.

It functions in the pathway cofactor degradation; nicotinate degradation [regulation]. In terms of biological role, transcriptional repressor for the nicCDEFTP and nicXR operons, encoding the lower aerobic nicotinate degradation pathway. Acts under non-induced conditions: repression of the nicCDEFTP and nicXR operons becomes alleviated in presence of 6-hydroxynicotinate (6HNA). This chain is HTH-type transcriptional repressor NicR (nicR), found in Pseudomonas putida (strain ATCC 47054 / DSM 6125 / CFBP 8728 / NCIMB 11950 / KT2440).